A 436-amino-acid chain; its full sequence is MHLLVYLSLFFALALASVTEISLDNKHRHRHEQQGHHDSAKHGHQKDKQQQEQIKNDEGKLTKEEKILSEENSDFSVNLFNQLSTESKRSPRKNIFFSPISISAAFYMLALGAKSETHQQILKGLSFNKKKLSESQVHEAFKRLIEDSNNPMKAHQFTIGNALFVEQTVNILKGFEENVKHYYQAGVFPMNFKDPDNAKKQLNNYVKDKTHGVIQEMIRELDSNTEMVLVNYVLYKGEWANNFNPTLTQKSLFSVDKNTNVTVQMMNRLGLYRTYQDDDCKIIELPYKNDTAMLLVVPQLGKIQELVLTSKLINHWYESLATSIVDLYMPTFSISGKVVLKDTLRKMGISDIFTDKADLTGISEQIKLKVSMASHNAVLNVNEFGTEAVGATSAQASPTKLFPPFLIDSPFLVMIYSRTLGSQLFMGKVMDPTNAQ.

An N-terminal signal peptide occupies residues 1–16 (MHLLVYLSLFFALALA). Residues 26–60 (KHRHRHEQQGHHDSAKHGHQKDKQQQEQIKNDEGK) form a disordered region. Positions 32 to 60 (EQQGHHDSAKHGHQKDKQQQEQIKNDEGK) are enriched in basic and acidic residues. 2 N-linked (GlcNAc...) asparagine glycosylation sites follow: asparagine 260 and asparagine 289.

Belongs to the serpin family. As to expression, liver.

It localises to the secreted. Its subcellular location is the extracellular space. In terms of biological role, not yet known. In Xenopus laevis (African clawed frog), this protein is Serine protease inhibitor A6 (serpina6).